Consider the following 127-residue polypeptide: UPF0102 protein Glov_2230 (127 aa).

This sequence belongs to the UPF0102 family.

This chain is UPF0102 protein Glov_2230, found in Trichlorobacter lovleyi (strain ATCC BAA-1151 / DSM 17278 / SZ) (Geobacter lovleyi).